The sequence spans 337 residues: MSATSLPGSQQPDLGEIRHDWSVAEIRAIHDLPLMDLVFRAAQVHRRHNDPADIQRASLLSIKTGGCPEDCAYCPQSAHHKGAGVARERLMPVETVLAEAAAAKAAGAQRFCMGAAWRQPKDGPEFDAVLAMVRGVRGLGMEACVTLGMLTPSQAGRLAEAGLTSYNHNLDTGPDFYEDIISTRTYDERLQTLANVREAGIGVCCGGIVGMGEGVTDRAAMLQVLANHAPHPESVPINALVAVPGTPLEDQPAVDPFDLVRMCATARIVMPRSRVRLSAGRKSLTREAQVLCFLAGANSIFYGERLLTTANNGQDDDAALLADLGIRVGEPVRAAAE.

A Radical SAM core domain is found at 52-281; it reads ADIQRASLLS…RSRVRLSAGR (230 aa). Positions 67, 71, and 74 each coordinate [4Fe-4S] cluster. 4 residues coordinate [2Fe-2S] cluster: Cys-112, Cys-144, Cys-204, and Arg-276.

The protein belongs to the radical SAM superfamily. Biotin synthase family. Homodimer. [4Fe-4S] cluster is required as a cofactor. Requires [2Fe-2S] cluster as cofactor.

The enzyme catalyses (4R,5S)-dethiobiotin + (sulfur carrier)-SH + 2 reduced [2Fe-2S]-[ferredoxin] + 2 S-adenosyl-L-methionine = (sulfur carrier)-H + biotin + 2 5'-deoxyadenosine + 2 L-methionine + 2 oxidized [2Fe-2S]-[ferredoxin]. The protein operates within cofactor biosynthesis; biotin biosynthesis; biotin from 7,8-diaminononanoate: step 2/2. Catalyzes the conversion of dethiobiotin (DTB) to biotin by the insertion of a sulfur atom into dethiobiotin via a radical-based mechanism. The protein is Biotin synthase of Methylobacterium radiotolerans (strain ATCC 27329 / DSM 1819 / JCM 2831 / NBRC 15690 / NCIMB 10815 / 0-1).